The following is a 360-amino-acid chain: Phospho-N-acetylmuramoyl-pentapeptide-transferase (360 aa).

The next 10 helical transmembrane spans lie at 24 to 44, 69 to 89, 92 to 112, 133 to 153, 158 to 178, 199 to 219, 239 to 259, 263 to 283, 288 to 308, and 337 to 357; these read RAVMAALTALAFSLMFGPWTI, GTPTMGGSLILTAITVSTLLW, WANPYIWILLGVLLATGALGF, MVWQSSVAIIAGLALFYLAAN, ILIVPFFKQIALPLGVVGFLV, GLATFPVVLVAAGLAIFAYAS, VVIFCTAMCGACLGFLWFNAY, VFMGDVGALALGAALGTVAVI, FVLVIMGGLFVVEAVSVMLQV, and QVVVRFWIITIVLVLIGLSTL.

This sequence belongs to the glycosyltransferase 4 family. MraY subfamily. Mg(2+) is required as a cofactor.

Its subcellular location is the cell inner membrane. It catalyses the reaction UDP-N-acetyl-alpha-D-muramoyl-L-alanyl-gamma-D-glutamyl-meso-2,6-diaminopimeloyl-D-alanyl-D-alanine + di-trans,octa-cis-undecaprenyl phosphate = di-trans,octa-cis-undecaprenyl diphospho-N-acetyl-alpha-D-muramoyl-L-alanyl-D-glutamyl-meso-2,6-diaminopimeloyl-D-alanyl-D-alanine + UMP. The protein operates within cell wall biogenesis; peptidoglycan biosynthesis. Catalyzes the initial step of the lipid cycle reactions in the biosynthesis of the cell wall peptidoglycan: transfers peptidoglycan precursor phospho-MurNAc-pentapeptide from UDP-MurNAc-pentapeptide onto the lipid carrier undecaprenyl phosphate, yielding undecaprenyl-pyrophosphoryl-MurNAc-pentapeptide, known as lipid I. This Neisseria meningitidis serogroup A / serotype 4A (strain DSM 15465 / Z2491) protein is Phospho-N-acetylmuramoyl-pentapeptide-transferase.